A 274-amino-acid polypeptide reads, in one-letter code: Transmembrane protein 106B (274 aa).

Over residues 1-11 (MGKSLSHLPLH) the composition is skewed to low complexity. The segment at 1–20 (MGKSLSHLPLHSSKEDAYDG) is disordered. The N-myristoyl glycine moiety is linked to residue G2. Over 2-96 (GKSLSHLPLH…QRLRPRRTKL (95 aa)) the chain is Cytoplasmic. The residue at position 33 (S33) is a Phosphoserine. A helical transmembrane segment spans residues 97-117 (YVMASVFVCLLLSGLAVFFLF). Topologically, residues 118-274 (PRSIDVKYIG…EYLNVLQPQQ (157 aa)) are lumenal. N-linked (GlcNAc...) asparagine glycosylation is found at N145, N151, N164, and N183. An intrachain disulfide couples C214 to C253. A glycan (N-linked (GlcNAc...) asparagine) is linked at N256.

It belongs to the TMEM106 family. In terms of assembly, can form homomers. Interacts (via N-terminus) with MAP6 (via C-terminus). Interacts (via C-terminus) with the vacuolar-type ATPase subunit ATP6AP1. Interacts (via N-terminus) with AP2M1 and CLTC. Interacts with TMEM106C. As to quaternary structure, (Microbial infection) Interacts with SARS coronavirus-2/SARS-CoV-2 spike protein (via RBD domain). In terms of tissue distribution, expressed in the brain, including in the frontal cortex (at protein level). Expressed in lung epithelial cells.

It is found in the late endosome membrane. The protein resides in the lysosome membrane. The protein localises to the cell membrane. Functionally, in neurons, involved in the transport of late endosomes/lysosomes. May be involved in dendrite morphogenesis and maintenance by regulating lysosomal trafficking. May act as a molecular brake for retrograde transport of late endosomes/lysosomes, possibly via its interaction with MAP6. In motoneurons, may mediate the axonal transport of lysosomes and axonal sorting at the initial segment. It remains unclear whether TMEM106B affects the transport of moving lysosomes in the anterograde or retrograde direction in neurites and whether it is important in the sorting of lysosomes in axons or in dendrites. In neurons, may also play a role in the regulation of lysosomal size and responsiveness to stress. Required for proper lysosomal acidification. In terms of biological role, (Microbial infection) Plays a role in human coronavirus SARS-CoV-2 infection, but not in common cold coronaviruses HCoV-229E and HCoV-OC43 infections. Involved in ACE2-independent SARS-CoV-2 cell entry. Required for post-endocytic stage of virus entry, facilitates spike-mediated membrane fusion. Virus attachment and endocytosis can also be mediated by other cell surface receptors. The protein is Transmembrane protein 106B of Homo sapiens (Human).